The chain runs to 519 residues: Baeyer-Villiger monooxygenase (519 aa).

Residues Glu41, 49-52 (TWRD), Asp61, Tyr67, and Val110 each bind FAD. Position 59 to 61 (59 to 61 (ACD)) interacts with NADP(+). NADP(+) contacts are provided by residues 183–189 (TGASAIQ), 206–207 (RT), and 292–293 (KR). Residue Met399 coordinates FAD. The segment at 499 to 519 (GAKAAEADTGADTGADAEVSA) is disordered.

Belongs to the FAD-binding monooxygenase family. FAD is required as a cofactor.

Catalyzes a Baeyer-Villiger oxidation reaction, i.e. the insertion of an oxygen atom into a carbon-carbon bond adjacent to a carbonyl, which converts ketones to esters or lactones using NADPH and/or NADH as an electron donor. Thus, can convert bicyclo[3.2.0]hept-2-en-6-one into the oxidative lactone products 2-oxabicyclo[3.3.0]oct-6-en-3-one and 3-oxabicyclo[3.3.0]oct-6-en-2-one. Is also able to catalyze the sulfoxidation of methyl phenyl sulfide (thioanisole). The protein is Baeyer-Villiger monooxygenase of Streptomyces coelicolor (strain ATCC BAA-471 / A3(2) / M145).